The primary structure comprises 570 residues: Methyl-coenzyme M reductase subunit alpha (570 aa).

Residue Gln161 coordinates coenzyme F430. Residues Arg239, 270-271 (KH), and Arg284 each bind coenzyme B. His271 is subject to Pros-methylhistidine. Position 285 is a 5-methylarginine (Arg285). Residues Tyr346 and Phe464 each coordinate coenzyme M. A 1-thioglycine modification is found at Gly465. (Z)-2,3-didehydroaspartate is present on Asp470. Cys472 is modified (S-methylcysteine).

This sequence belongs to the methyl-coenzyme M reductase alpha subunit family. MCR is a hexamer of two alpha, two beta, and two gamma chains, forming a dimer of heterotrimers. Coenzyme F430 serves as cofactor. Post-translationally, the alpha subunit contains five modified amino acids near the active site region. Is methylated on His-271, Arg-285 and Cys-472, probably by the action of specific S-adenosylmethionine-dependent methyltransferases. Also contains a thioglycine at position 465, forming a thiopeptide bond. Contains a didehydroaspartate residue at position 470. The methylation on C5 of Arg-285 is a post-translational methylation not essential in vivo, but which plays a role for the stability and structural integrity of MCR. Does not show a methylation at Gln-420, as shown for M.marburgensis.

Its subcellular location is the cytoplasm. It carries out the reaction coenzyme B + methyl-coenzyme M = methane + coenzyme M-coenzyme B heterodisulfide. The protein operates within one-carbon metabolism; methyl-coenzyme M reduction; methane from methyl-coenzyme M: step 1/1. Its function is as follows. Component of the methyl-coenzyme M reductase (MCR) I that catalyzes the reductive cleavage of methyl-coenzyme M (CoM-S-CH3 or 2-(methylthio)ethanesulfonate) using coenzyme B (CoB or 7-mercaptoheptanoylthreonine phosphate) as reductant which results in the production of methane and the mixed heterodisulfide of CoB and CoM (CoM-S-S-CoB). This is the final step in methanogenesis. The sequence is that of Methyl-coenzyme M reductase subunit alpha (mcrA) from Methanosarcina barkeri (strain Fusaro / DSM 804).